A 62-amino-acid chain; its full sequence is DNA-directed RNA polymerase subunit Rpo10 (62 aa).

Residues Cys-6, Cys-9, Cys-43, and Cys-44 each coordinate Zn(2+).

Belongs to the archaeal Rpo10/eukaryotic RPB10 RNA polymerase subunit family. In terms of assembly, part of the RNA polymerase complex. Requires Zn(2+) as cofactor.

It is found in the cytoplasm. The catalysed reaction is RNA(n) + a ribonucleoside 5'-triphosphate = RNA(n+1) + diphosphate. DNA-dependent RNA polymerase (RNAP) catalyzes the transcription of DNA into RNA using the four ribonucleoside triphosphates as substrates. The sequence is that of DNA-directed RNA polymerase subunit Rpo10 from Methanosarcina barkeri (strain Fusaro / DSM 804).